The chain runs to 221 residues: Deoxyribose-phosphate aldolase (221 aa).

The Proton donor/acceptor role is filled by aspartate 90. The active-site Schiff-base intermediate with acetaldehyde is lysine 152. Lysine 181 (proton donor/acceptor) is an active-site residue.

Belongs to the DeoC/FbaB aldolase family. DeoC type 1 subfamily.

Its subcellular location is the cytoplasm. It catalyses the reaction 2-deoxy-D-ribose 5-phosphate = D-glyceraldehyde 3-phosphate + acetaldehyde. It functions in the pathway carbohydrate degradation; 2-deoxy-D-ribose 1-phosphate degradation; D-glyceraldehyde 3-phosphate and acetaldehyde from 2-deoxy-alpha-D-ribose 1-phosphate: step 2/2. Its function is as follows. Catalyzes a reversible aldol reaction between acetaldehyde and D-glyceraldehyde 3-phosphate to generate 2-deoxy-D-ribose 5-phosphate. The sequence is that of Deoxyribose-phosphate aldolase from Exiguobacterium sp. (strain ATCC BAA-1283 / AT1b).